The primary structure comprises 300 residues: Ribosomal RNA small subunit methyltransferase H (300 aa).

Residues 33 to 35 (GGH), Asp52, Phe79, Asp100, and Gln107 each bind S-adenosyl-L-methionine.

It belongs to the methyltransferase superfamily. RsmH family.

The protein localises to the cytoplasm. It carries out the reaction cytidine(1402) in 16S rRNA + S-adenosyl-L-methionine = N(4)-methylcytidine(1402) in 16S rRNA + S-adenosyl-L-homocysteine + H(+). Functionally, specifically methylates the N4 position of cytidine in position 1402 (C1402) of 16S rRNA. This chain is Ribosomal RNA small subunit methyltransferase H, found in Mycoplasmopsis agalactiae (strain NCTC 10123 / CIP 59.7 / PG2) (Mycoplasma agalactiae).